The sequence spans 199 residues: uncharacterized protein (199 aa).

Residues 112 to 160 form the G-patch domain; that stretch reads PKSLGYRVLSQYGWSPQGDTAGLGLENQGRRAPVRAFRVKNDTIGLGTK.

This is an uncharacterized protein from Schizosaccharomyces pombe (strain 972 / ATCC 24843) (Fission yeast).